The following is a 140-amino-acid chain: Transcription antitermination protein NusB (140 aa).

It belongs to the NusB family.

Its function is as follows. Involved in transcription antitermination. Required for transcription of ribosomal RNA (rRNA) genes. Binds specifically to the boxA antiterminator sequence of the ribosomal RNA (rrn) operons. This Streptococcus pneumoniae (strain JJA) protein is Transcription antitermination protein NusB.